The primary structure comprises 537 residues: Polyadenylate-binding protein 6 (537 aa).

RRM domains are found at residues 21 to 99 (GSLY…WSQR), 112 to 188 (ANLY…KFIN), 202 to 279 (TNVY…KALK), and 304 to 381 (SNLY…VAER). Residues 503–537 (KATTSEENRKEERRLTLSGKLSPEVKVEESGKQLQ) form a disordered region. Basic and acidic residues-rich tracts occupy residues 506–517 (TSEENRKEERRL) and 525–537 (PEVK…KQLQ).

The protein belongs to the polyadenylate-binding protein type-1 family. Expressed at low levels in leaves and young seedlings.

Its subcellular location is the cytoplasm. The protein localises to the nucleus. Its function is as follows. Binds the poly(A) tail of mRNA. Appears to be an important mediator of the multiple roles of the poly(A) tail in mRNA biogenesis, stability and translation. In Arabidopsis thaliana (Mouse-ear cress), this protein is Polyadenylate-binding protein 6 (PAB6).